Reading from the N-terminus, the 321-residue chain is MPDHGMSRLLVAAFYAFTPLDDDQREALLSALPTQASHGAVLGSVLVAKEGVNGTISGPEQGVEGLLEHLQEQLKLGEQHFERLEVKRSWAERSVFRRFKARRKKEIVTMGVTGVDPRANVGTYVDPEDWNGLVDDPDTLVIDTRNHYETAIGSFDGAIDPGTDSFRDFPHWAETKLRPLIDETAPKRIAMFCTGGIRCEKASSYLQHQGFGEVHHLRGGILKYLEQVPEEESRWRGECFVFDQRVALNHQLEPGEHSLCHACGLPLSPEQRSLPSYIKGVQCLHCIDRFSESDRQRFAMRQRQMDQLSSASSKKSDDFSL.

The region spanning Asp135–Ser233 is the Rhodanese domain. Cys193 serves as the catalytic Cysteine persulfide intermediate. Positions Arg301 to Leu321 are disordered.

The protein belongs to the TrhO family.

The catalysed reaction is uridine(34) in tRNA + AH2 + O2 = 5-hydroxyuridine(34) in tRNA + A + H2O. Functionally, catalyzes oxygen-dependent 5-hydroxyuridine (ho5U) modification at position 34 in tRNAs. The sequence is that of tRNA uridine(34) hydroxylase from Parasynechococcus marenigrum (strain WH8102).